Reading from the N-terminus, the 374-residue chain is Chaperone protein DnaJ (374 aa).

In terms of domain architecture, J spans 5-71 (DLYAILGVCR…QKRASYDRFG (67 aa)). Residues 132 to 210 (GVEKQIRIAT…CQGTGRVKDT (79 aa)) form a CR-type zinc finger. Zn(2+)-binding residues include Cys-145, Cys-148, Cys-162, Cys-165, Cys-184, Cys-187, Cys-198, and Cys-201. CXXCXGXG motif repeat units lie at residues 145–152 (CGECHGSG), 162–169 (CPTCNGAG), 184–191 (CPTCHGRG), and 198–205 (CNKCQGTG).

It belongs to the DnaJ family. In terms of assembly, homodimer. It depends on Zn(2+) as a cofactor.

The protein resides in the cytoplasm. Its function is as follows. Participates actively in the response to hyperosmotic and heat shock by preventing the aggregation of stress-denatured proteins and by disaggregating proteins, also in an autonomous, DnaK-independent fashion. Unfolded proteins bind initially to DnaJ; upon interaction with the DnaJ-bound protein, DnaK hydrolyzes its bound ATP, resulting in the formation of a stable complex. GrpE releases ADP from DnaK; ATP binding to DnaK triggers the release of the substrate protein, thus completing the reaction cycle. Several rounds of ATP-dependent interactions between DnaJ, DnaK and GrpE are required for fully efficient folding. Also involved, together with DnaK and GrpE, in the DNA replication of plasmids through activation of initiation proteins. This Dichelobacter nodosus (strain VCS1703A) protein is Chaperone protein DnaJ.